The primary structure comprises 145 residues: Basic phospholipase A2 cPm05 (145 aa).

The signal sequence occupies residues 1–21 (MYPAHLLVLLAVCISLLGASA). Positions 22 to 27 (IPPLPL) are excised as a propeptide. Cystine bridges form between C38–C98, C54–C144, C56–C72, C71–C125, C78–C118, C87–C111, and C105–C116. Residues Y55, G57, and G59 each coordinate Ca(2+). H75 is a catalytic residue. D76 contacts Ca(2+). D119 is a catalytic residue.

The protein belongs to the phospholipase A2 family. Group I subfamily. D49 sub-subfamily. Ca(2+) serves as cofactor. In terms of tissue distribution, expressed by the venom gland.

Its subcellular location is the secreted. It catalyses the reaction a 1,2-diacyl-sn-glycero-3-phosphocholine + H2O = a 1-acyl-sn-glycero-3-phosphocholine + a fatty acid + H(+). Its function is as follows. PLA2 catalyzes the calcium-dependent hydrolysis of the 2-acyl groups in 3-sn-phosphoglycerides. In Laticauda semifasciata (Black-banded sea krait), this protein is Basic phospholipase A2 cPm05.